We begin with the raw amino-acid sequence, 373 residues long: ATP-dependent 6-phosphofructokinase (373 aa).

Residues G12, 74 to 75, and 110 to 113 contribute to the ATP site; these read RD and GGGT. Residues 133-135, R170, 177-179, E230, R291, and 297-300 contribute to the substrate site; these read TID, MGH, and YVQR. The Proton acceptor role is filled by D135.

Belongs to the phosphofructokinase type A (PFKA) family. Mixed-substrate PFK group III subfamily. In terms of assembly, homodimer or homotetramer. Mg(2+) is required as a cofactor.

Its subcellular location is the cytoplasm. It catalyses the reaction beta-D-fructose 6-phosphate + ATP = beta-D-fructose 1,6-bisphosphate + ADP + H(+). It functions in the pathway carbohydrate degradation; glycolysis; D-glyceraldehyde 3-phosphate and glycerone phosphate from D-glucose: step 3/4. In terms of biological role, catalyzes the phosphorylation of D-fructose 6-phosphate to fructose 1,6-bisphosphate by ATP, the first committing step of glycolysis. This Propionibacterium freudenreichii subsp. shermanii (strain ATCC 9614 / DSM 4902 / CIP 103027 / NCIMB 8099 / CIRM-BIA1) protein is ATP-dependent 6-phosphofructokinase.